We begin with the raw amino-acid sequence, 104 residues long: Gastrin (104 aa).

The N-terminal stretch at 1 to 21 is a signal peptide; sequence MQRLCVYVLILALALATFSEA. The propeptide occupies 22–58; that stretch reads SWKPRSRLQDAPSGPGANRGLEPHGLDQLGPASHHRR. The disordered stretch occupies residues 22-70; that stretch reads SWKPRSRLQDAPSGPGANRGLEPHGLDQLGPASHHRRQLGLQGPPQLVA. Residues Gln59 and Gln76 each carry the pyrrolidone carboxylic acid modification. Position 87 is a sulfotyrosine (Tyr87). The residue at position 92 (Phe92) is a Phenylalanine amide. A Phosphoserine modification is found at Ser96. Positions 96-104 are excised as a propeptide; sequence SAEEGDQRP.

This sequence belongs to the gastrin/cholecystokinin family.

Its subcellular location is the secreted. Functionally, gastrin stimulates the stomach mucosa to produce and secrete hydrochloric acid and the pancreas to secrete its digestive enzymes. It also stimulates smooth muscle contraction and increases blood circulation and water secretion in the stomach and intestine. The polypeptide is Gastrin (GAST) (Canis lupus familiaris (Dog)).